The primary structure comprises 81 residues: MKTLLLTLVVVTIVCLDLGNSLICYVSREGQTQTCPEGMNLCEKYAVSYFHDGRYFFTYECTSTCHRGDRNVCCSTDLCNK.

Residues 1–21 form the signal peptide; sequence MKTLLLTLVVVTIVCLDLGNS. 4 cysteine pairs are disulfide-bonded: Cys-24-Cys-42, Cys-35-Cys-61, Cys-65-Cys-73, and Cys-74-Cys-79.

It belongs to the three-finger toxin family. Short-chain subfamily. Expressed by the venom gland.

The protein localises to the secreted. Snake venom neurotoxin that blocks neuromuscular transmission, presenting a postsynaptic action through the nicotinic acetylcholine receptor (nAChR). Has no cytotoxic activity. This is Mipartoxin-2 from Micrurus mipartitus (Red-tailed coral snake).